A 429-amino-acid chain; its full sequence is Glutamate-1-semialdehyde 2,1-aminomutase 2 (429 aa).

The residue at position 268 (K268) is an N6-(pyridoxal phosphate)lysine.

Belongs to the class-III pyridoxal-phosphate-dependent aminotransferase family. HemL subfamily. Homodimer. Requires pyridoxal 5'-phosphate as cofactor.

The protein localises to the cytoplasm. It catalyses the reaction (S)-4-amino-5-oxopentanoate = 5-aminolevulinate. It functions in the pathway porphyrin-containing compound metabolism; protoporphyrin-IX biosynthesis; 5-aminolevulinate from L-glutamyl-tRNA(Glu): step 2/2. The sequence is that of Glutamate-1-semialdehyde 2,1-aminomutase 2 from Geobacillus thermodenitrificans (strain NG80-2).